The chain runs to 1023 residues: GATOR2 complex protein WDR24 (1023 aa).

WD repeat units follow at residues 16 to 54 (NLGSPLSAISSSPDSTKLIVAGRDIVKIVSVQNNEFKVT), 64 to 108 (SLNY…SKSV), 114 to 154 (DHSR…NASK), 159 to 199 (PKSE…IAVE), 203 to 243 (SHQG…SLNN), 245 to 287 (STIS…IPLF), and 291 to 329 (DHRDVPTGLIWKSPSSLISCSKDSHLLLNEFQDSYKPYQ). Residues 563 to 578 (SKNIIDNSNDSNQEIN) are compositionally biased toward low complexity. Disordered regions lie at residues 563–621 (SKNI…EPPS) and 661–824 (QKST…SIEN). Over residues 584–593 (KEDEEEDDDN) the composition is skewed to acidic residues. Positions 661–681 (QKSTDNISDNNSNVHVNIKRQ) are enriched in polar residues. The span at 682–695 (NQPTNNNNNNSNID) shows a compositional bias: low complexity. Positions 696-742 (NLEKKSNKSKSTKENKESSLTDQNKQKRNDNKEKIDNNEIDNDNKDN) are enriched in basic and acidic residues. Residues 743–759 (NDDDDNDVDNIGEDNDE) show a composition bias toward acidic residues. Over residues 760-812 (INNNNDNNNNNNNNNNNNNNNNNNNNNNNNNNNNNNNNKNNNNDNNNNNNINN) the composition is skewed to low complexity. The C4-type zinc finger occupies 947 to 969 (ACSSCGKSIPQNSIICEKCNKAS). Cysteine 948, cysteine 951, cysteine 962, cysteine 965, cysteine 972, cysteine 975, cysteine 986, cysteine 989, histidine 991, histidine 994, histidine 997, cysteine 1010, cysteine 1014, histidine 1016, and cysteine 1018 together coordinate Zn(2+). The RING-type; atypical zinc-finger motif lies at 970 to 1021 (SKCSICRLPVKGMWVWCQGCGHGGHLEHMKSWFIDKNQKSCPTGCTHICTPF).

Belongs to the WD repeat WDR24 family. As to quaternary structure, probably part of the GATOR complex.

It is found in the lysosome membrane. The catalysed reaction is S-ubiquitinyl-[E2 ubiquitin-conjugating enzyme]-L-cysteine + [acceptor protein]-L-lysine = [E2 ubiquitin-conjugating enzyme]-L-cysteine + N(6)-ubiquitinyl-[acceptor protein]-L-lysine.. Its pathway is protein modification; protein ubiquitination. As a component of the GATOR complex may function in the amino acid-sensing branch of the TORC1 signaling pathway. In Dictyostelium discoideum (Social amoeba), this protein is GATOR2 complex protein WDR24.